The following is a 414-amino-acid chain: NAD-specific glutamate dehydrogenase (414 aa).

Residues Lys-70 and Lys-94 each coordinate substrate. The active-site Proton donor is the Lys-106. NAD(+) is bound by residues Thr-190 and Asn-221. Residue Ser-348 coordinates substrate.

Belongs to the Glu/Leu/Phe/Val dehydrogenases family. Homohexamer.

The enzyme catalyses L-glutamate + NAD(+) + H2O = 2-oxoglutarate + NH4(+) + NADH + H(+). In Staphylococcus aureus (strain COL), this protein is NAD-specific glutamate dehydrogenase (gluD).